The primary structure comprises 139 residues: MIKRYEACFLFKSEEIEYKGSLEEVKKSLEFFGATDVVSNFIGERALEYPIKKQARGRYEIIEFSMEGNNLKEFESRLKLIKNLLRYMILVKIVRKINTKKIKRRNFREFRDNVDKDSLKGASKVETPTGPESTDIQEK.

Residues 119 to 139 form a disordered region; sequence LKGASKVETPTGPESTDIQEK. The span at 130–139 shows a compositional bias: polar residues; it reads GPESTDIQEK.

Belongs to the bacterial ribosomal protein bS6 family.

Functionally, binds together with bS18 to 16S ribosomal RNA. In Borreliella burgdorferi (strain ZS7) (Borrelia burgdorferi), this protein is Small ribosomal subunit protein bS6.